Reading from the N-terminus, the 135-residue chain is Universal stress protein Aq_178 (135 aa).

The protein belongs to the universal stress protein A family.

The protein is Universal stress protein Aq_178 of Aquifex aeolicus (strain VF5).